Reading from the N-terminus, the 1693-residue chain is Serine protease filzig (1693 aa).

At 1–47 (MFKWVTPASTATLSRCTLPATTAATTTTTAMAATRTATTTTRTTRPQ) the chain is on the cytoplasmic side. A helical; Signal-anchor for type II membrane protein membrane pass occupies residues 48–68 (LLSIALTSLIIIVASFVPTTS). The Extracellular portion of the chain corresponds to 69 to 1693 (GFRSIETNGG…PWLRSITGVK (1625 aa)). Disordered regions lie at residues 170-198 (QQSA…QQPS), 212-321 (QQLD…NDDF), 352-465 (GLQD…THPG), and 477-524 (STGY…TTVS). 2 stretches are compositionally biased toward polar residues: residues 178–198 (FESY…QQPS) and 212–222 (QQLDSSSSISP). Composition is skewed to low complexity over residues 230–241 (EPQQQEYQSESE) and 252–268 (TSSS…SSAS). Residues 274-294 (EPSQPADASNDQTTQKINKQP) show a composition bias toward polar residues. Low complexity-rich tracts occupy residues 358-404 (SSES…PTQK), 422-431 (QQKPQQVAKP), and 488-501 (EPPK…PAEQ). The segment covering 502–524 (SYISSSTSAKRPTTGHNSPTTVS) has biased composition (polar residues). Residues Asn541 and Asn582 are each glycosylated (N-linked (GlcNAc...) asparagine). Disordered stretches follow at residues 615–635 (QDAS…PGYG), 752–1007 (HYNP…PPAT), and 1057–1090 (YAHR…TVLI). Positions 771–799 (SVSSHTTKVQEQMDETSNGYQQSETTSGY) are enriched in polar residues. The span at 836-847 (PRPKPSTKRPAV) shows a compositional bias: basic residues. 2 stretches are compositionally biased toward polar residues: residues 951–962 (QYDQPSAPSASY) and 989–1000 (KPISTSYVTGPS). Residues Asn1215 and Asn1272 are each glycosylated (N-linked (GlcNAc...) asparagine). 3 stretches are compositionally biased toward low complexity: residues 1297–1307 (PVRTATTTRPK), 1331–1353 (TTTR…TTRR), and 1362–1376 (RVSS…SSAR). A disordered region spans residues 1297–1435 (PVRTATTTRP…TPNLAFHSPS (139 aa)). Residues 1380–1391 (DEIVDEEDEEDV) show a composition bias toward acidic residues. In terms of domain architecture, Peptidase S1 spans 1449–1691 (IVGGKGSTFG…YKPWLRSITG (243 aa)). Cys1480 and Cys1496 are joined by a disulfide. Catalysis depends on charge relay system residues His1495 and Asp1544. 2 disulfides stabilise this stretch: Cys1608–Cys1627 and Cys1638–Cys1667. Ser1642 (charge relay system) is an active-site residue.

Belongs to the peptidase S1 family.

The protein localises to the cell membrane. Probable endopeptidase. In tracheal terminal cells, acts downstream of ich to regulate seamless tube growth and/or maintenance probably by processing lumenal matrix proteins. This Drosophila melanogaster (Fruit fly) protein is Serine protease filzig.